The sequence spans 191 residues: 7-methyl-GTP pyrophosphatase (191 aa).

Asp-70 functions as the Proton acceptor in the catalytic mechanism.

It belongs to the Maf family. YceF subfamily. The cofactor is a divalent metal cation.

The protein resides in the cytoplasm. The catalysed reaction is N(7)-methyl-GTP + H2O = N(7)-methyl-GMP + diphosphate + H(+). Functionally, nucleoside triphosphate pyrophosphatase that hydrolyzes 7-methyl-GTP (m(7)GTP). May have a dual role in cell division arrest and in preventing the incorporation of modified nucleotides into cellular nucleic acids. The protein is 7-methyl-GTP pyrophosphatase of Xanthomonas oryzae pv. oryzae (strain KACC10331 / KXO85).